The primary structure comprises 611 residues: Threonine--tRNA ligase (611 aa).

The tract at residues 211–509 (DHRKLGTELE…LTEHYAGEFP (299 aa)) is catalytic. Positions 310, 361, and 486 each coordinate Zn(2+).

This sequence belongs to the class-II aminoacyl-tRNA synthetase family. As to quaternary structure, homodimer. Zn(2+) is required as a cofactor.

It is found in the cytoplasm. It catalyses the reaction tRNA(Thr) + L-threonine + ATP = L-threonyl-tRNA(Thr) + AMP + diphosphate + H(+). In terms of biological role, catalyzes the attachment of threonine to tRNA(Thr) in a two-step reaction: L-threonine is first activated by ATP to form Thr-AMP and then transferred to the acceptor end of tRNA(Thr). Also edits incorrectly charged L-seryl-tRNA(Thr). This chain is Threonine--tRNA ligase, found in Nautilia profundicola (strain ATCC BAA-1463 / DSM 18972 / AmH).